Consider the following 7760-residue polypeptide: Malpinin synthetase (7760 aa).

2 disordered regions span residues 42–115 (ENPE…VNEK) and 161–180 (LDLPTDRPRPSHPSFEGDRV). Residues 65–79 (TPRSASPLSSYTGSP) are compositionally biased toward polar residues. The condensation 1 stretch occupies residues 87–389 (TELSRTLSGD…LSLDERTFLL (303 aa)). A compositionally biased stretch (basic and acidic residues) spans 164-180 (PTDRPRPSHPSFEGDRV). An adenylation 1 region spans residues 409–813 (FEQQAERRPH…GRNDHQVKIR (405 aa)). The 75-residue stretch at 926–1000 (PPQGELETAI…AFAHAIGQHR (75 aa)) folds into the Carrier 1 domain. At serine 961 the chain carries O-(pantetheine 4'-phosphoryl)serine. The segment at 1046–1477 (QDIYALAPLQ…VLPADERKLL (432 aa)) is dual epimerase/condensation (E/C) domain 1. Positions 1498 to 1893 (FEQYADRVPN…GRTDYQVKIR (396 aa)) are adenylation 2. The Carrier 2 domain maps to 2003–2077 (APEGEVENAI…ALAQSIGEHR (75 aa)). Serine 2038 bears the O-(pantetheine 4'-phosphoryl)serine mark. Positions 2099 to 2558 (PLIDLNQNDI…LPTEERQLLT (460 aa)) are dual epimerase/condensation (E/C) domain 2. The tract at residues 2578-2973 (FEQHVDRAPD…GRADFQVKIR (396 aa)) is adenylation 3. One can recognise a Carrier 3 domain in the interval 3083 to 3157 (APQGAVEAAI…ALAQSIGEHR (75 aa)). Position 3118 is an O-(pantetheine 4'-phosphoryl)serine (serine 3118). The interval 3203 to 3634 (QDIYALAPLQ…HLNVLPAEER (432 aa)) is dual epimerase/condensation (E/C) domain 3. The segment at 3658–4057 (FEQQAERTPD…GRNDDQIKIR (400 aa)) is adenylation 4. Residues 4174 to 4248 (APQGEVETAL…AFASRVQEQL (75 aa)) enclose the Carrier 4 domain. Serine 4209 is subject to O-(pantetheine 4'-phosphoryl)serine. The condensation 2 stretch occupies residues 4267–4705 (LPLSFAQQRL…AAEILSQDER (439 aa)). The tract at residues 4729 to 5133 (FEQRVESTPD…GRNDHQVKIR (405 aa)) is adenylation 5. Positions 5250 to 5324 (APEGEVETAI…VFAASIGHHQ (75 aa)) constitute a Carrier 5 domain. Serine 5285 carries the O-(pantetheine 4'-phosphoryl)serine modification. Residues 5370 to 5804 (QDIYSLSPLQ…VLPAEERTLL (435 aa)) are dual dehydration/condensation (C*) domain. Positions 5825-6224 (FEQQSERTPE…GRNDDQVKIR (400 aa)) are adenylation 6. A Carrier 6 domain is found at 6338–6412 (APQGEVETAL…ALAQSIGQHH (75 aa)). Serine 6373 carries the post-translational modification O-(pantetheine 4'-phosphoryl)serine. The segment at 6458 to 6890 (QDIYALSPLQ…QLDTVPAEEH (433 aa)) is dual epimerase/condensation (E/C) domain 4. Residues 6914–7300 (FEHQVERTPA…KFLPDGNVVC (387 aa)) form an adenylation 7 region. The region spanning 7428–7503 (EPRGAIENIL…ELAPRLLATG (76 aa)) is the Carrier 7 domain. Serine 7463 bears the O-(pantetheine 4'-phosphoryl)serine mark. The segment at 7561 to 7722 (DNGNMASSLD…KPYVQGSIEV (162 aa)) is thioesterase (TE) domain.

Belongs to the NRP synthetase family.

In terms of biological role, heptamodular nonribosomal peptide synthetase that catalyzes the biosynthesis of malpinins, natural products that show biosurfactant activities. Malpinins are acetylated hexapeptides (Ac-D-Leu/Val-D-Arg-D-Leu/Val-L-Phe/Leu-Dhb-D-Trp) containing a non-canonical amino acid derived from dehydration of L-Trp, (Z)-dehydrobutyrine (Dhb), at position 5, as well as a C-terminal D-amino acid, D-tryptophan, that can be oxidized to kynurenine. Incorporated D-amino acids in positions 1, 3 and 4 are variable resulting in the malpinin A-congeners malpinin B to E. Both modules M1 and M3 have relaxed specificity towards aliphatic amino acids (L-Leu &gt; L-Met &gt; L/D-Val &gt; L-Cys), explaining Val at position 1 and 3 in malpinin A-congeners malpinin B to D. The incorporation of L-Leu, but not N-acetyl-L-Leu by module 1 suggests the N-terminal acetylation occurs at a later stage of biosynthesis. Similar to M1 and M3, M4 has a broad substrate spectrum showing the highest activity with L-Phe followed by other hydrophobic amino acids (L-Phe &gt; L-Met = L-Trp). In contrast, M2, M5 and M6 are highly specific for L-Arg, L-Thr, and L-Trp, respectively. Solely, M7 converted its preferred substrate (L-Phe) with a 15 000-fold reduced turnover rate compared to the most active module M6, indicating that its A domain cannot contribute to the malpinin biosynthesis due to low activity. Since the last T domain in malA is apparently not loaded with an amino acid, either the TE domain must offload the oligopeptide from the preceding T domain or the dual E/C domain of M7 must transfer the final peptide chain to the free acceptor T domain of M7 prior to release. This Mortierella alpina (Oleaginous fungus) protein is Malpinin synthetase.